The chain runs to 279 residues: Diaminopimelate epimerase (279 aa).

2 residues coordinate substrate: Asn-11 and Asn-72. Cys-81 functions as the Proton donor in the catalytic mechanism. Substrate is bound by residues 82–83 (GN), Asn-187, and 205–206 (ER). Residue Cys-215 is the Proton acceptor of the active site. Position 216-217 (216-217 (GT)) interacts with substrate.

It belongs to the diaminopimelate epimerase family. Homodimer.

Its subcellular location is the cytoplasm. The catalysed reaction is (2S,6S)-2,6-diaminopimelate = meso-2,6-diaminopimelate. It participates in amino-acid biosynthesis; L-lysine biosynthesis via DAP pathway; DL-2,6-diaminopimelate from LL-2,6-diaminopimelate: step 1/1. Functionally, catalyzes the stereoinversion of LL-2,6-diaminopimelate (L,L-DAP) to meso-diaminopimelate (meso-DAP), a precursor of L-lysine and an essential component of the bacterial peptidoglycan. The protein is Diaminopimelate epimerase of Aquifex aeolicus (strain VF5).